The chain runs to 802 residues: Sucrose synthase 1 (802 aa).

The GT-B glycosyltransferase stretch occupies residues 272 to 749; sequence MMFNVVILSP…GLQRIYEKYT (478 aa).

It belongs to the glycosyltransferase 1 family. Plant sucrose synthase subfamily.

It catalyses the reaction an NDP-alpha-D-glucose + D-fructose = a ribonucleoside 5'-diphosphate + sucrose + H(+). Sucrose-cleaving enzyme that provides UDP-glucose and fructose for various metabolic pathways. Most active in the sink tissues where it is responsible for the breakdown of the arriving sucrose. The chain is Sucrose synthase 1 (SH-1) from Zea mays (Maize).